Consider the following 288-residue polypeptide: Polyamine aminopropyltransferase (288 aa).

Positions 9–242 constitute a PABS domain; sequence SEWLDEYHQG…GLWSWTFASM (234 aa). Residue Gln-36 coordinates S-methyl-5'-thioadenosine. Residues His-67 and Asp-91 each coordinate spermidine. S-methyl-5'-thioadenosine contacts are provided by residues Glu-111 and 143 to 144; that span reads NG. Asp-162 serves as the catalytic Proton acceptor. Residue Pro-169 participates in S-methyl-5'-thioadenosine binding.

The protein belongs to the spermidine/spermine synthase family. In terms of assembly, homodimer or homotetramer.

It is found in the cytoplasm. The catalysed reaction is S-adenosyl 3-(methylsulfanyl)propylamine + putrescine = S-methyl-5'-thioadenosine + spermidine + H(+). It functions in the pathway amine and polyamine biosynthesis; spermidine biosynthesis; spermidine from putrescine: step 1/1. Catalyzes the irreversible transfer of a propylamine group from the amino donor S-adenosylmethioninamine (decarboxy-AdoMet) to putrescine (1,4-diaminobutane) to yield spermidine. The protein is Polyamine aminopropyltransferase of Prochlorococcus marinus (strain NATL2A).